The sequence spans 763 residues: Phosphoglycerol transferase I (763 aa).

The next 4 helical transmembrane spans lie at 1-21 (MSEL…AWKA), 26-46 (WWFA…ITLY), 77-97 (ILPG…LGWI), and 108-128 (FGYS…SPAF).

Belongs to the OpgB family.

The protein resides in the cell inner membrane. The catalysed reaction is a phosphatidylglycerol + a membrane-derived-oligosaccharide D-glucose = a 1,2-diacyl-sn-glycerol + a membrane-derived-oligosaccharide 6-(glycerophospho)-D-glucose.. Its pathway is glycan metabolism; osmoregulated periplasmic glucan (OPG) biosynthesis. In terms of biological role, transfers a phosphoglycerol residue from phosphatidylglycerol to the membrane-bound nascent glucan backbones. In Escherichia fergusonii (strain ATCC 35469 / DSM 13698 / CCUG 18766 / IAM 14443 / JCM 21226 / LMG 7866 / NBRC 102419 / NCTC 12128 / CDC 0568-73), this protein is Phosphoglycerol transferase I.